Reading from the N-terminus, the 386-residue chain is SET and MYND domain-containing protein DDB_G0273589 (386 aa).

Residues 6–294 form the SET domain; the sequence is NGLELKSSEN…KGDQLTISYI (289 aa). An MYND-type zinc finger spans residues 51–94; sequence CFNCIKQLPSVIKLSLKCNQCNEIWYCNEQCKNENINKHQHYEC. A coiled-coil region spans residues 136 to 171; sequence NNKFIEQQLNNNNNNNNDNEQLTNTLDDVFDLVENQ.

It belongs to the class V-like SAM-binding methyltransferase superfamily.

Probable methyltransferase. This is SET and MYND domain-containing protein DDB_G0273589 from Dictyostelium discoideum (Social amoeba).